The sequence spans 266 residues: MICOS complex subunit MIC27 (266 aa).

The transit peptide at 1–27 (MAAIRMGKLTTMPAGLIYASVSVHAAK) directs the protein to the mitochondrion. Topologically, residues 28–110 (EEESKKQLVK…YVYMKNPPRD (83 aa)) are mitochondrial intermembrane. The chain crosses the membrane as a helical span at residues 111-129 (FLPKMGVITVSGLAGLVSA). At 130-137 (RKGSKFKK) the chain is on the mitochondrial matrix side. A helical transmembrane segment spans residues 138–155 (ITYPLGLATLGATVCYPV). Over 156–266 (QSVIIAKVTA…NVTNSGVLRI (111 aa)) the chain is Mitochondrial intermembrane. Serine 204 is modified (phosphoserine).

This sequence belongs to the apolipoprotein O/MICOS complex subunit Mic27 family. As to quaternary structure, component of the mitochondrial contact site and cristae organizing system (MICOS) complex, composed of at least MICOS10/MIC10, CHCHD3/MIC19, CHCHD6/MIC25, APOOL/MIC27, IMMT/MIC60, APOO/MIC23/MIC26 and MICOS13/MIC13. This complex was also known under the names MINOS or MitOS complex. The MICOS complex associates with mitochondrial outer membrane proteins SAMM50, MTX1 and MTX2 (together described as components of the mitochondrial outer membrane sorting assembly machinery (SAM) complex) and DNAJC11, mitochondrial inner membrane protein TMEM11 and with HSPA9. The MICOS and SAM complexes together with DNAJC11 are part of a large protein complex spanning both membranes termed the mitochondrial intermembrane space bridging (MIB) complex. Interacts with MICOS10/MIC10, IMMT/MIC60 and APOO/MIC23/MIC26.

Its subcellular location is the mitochondrion inner membrane. It localises to the mitochondrion. Its function is as follows. Component of the MICOS complex, a large protein complex of the mitochondrial inner membrane that plays crucial roles in the maintenance of crista junctions, inner membrane architecture, and formation of contact sites to the outer membrane. Specifically binds to cardiolipin (in vitro) but not to the precursor lipid phosphatidylglycerol. Plays a crucial role in crista junction formation and mitochondrial function. The polypeptide is MICOS complex subunit MIC27 (APOOL) (Pongo abelii (Sumatran orangutan)).